We begin with the raw amino-acid sequence, 721 residues long: 1,4-alpha-glucan branching enzyme GlgB (721 aa).

The active-site Nucleophile is D400. The Proton donor role is filled by E453.

This sequence belongs to the glycosyl hydrolase 13 family. GlgB subfamily. As to quaternary structure, monomer.

It catalyses the reaction Transfers a segment of a (1-&gt;4)-alpha-D-glucan chain to a primary hydroxy group in a similar glucan chain.. Its pathway is glycan biosynthesis; glycogen biosynthesis. Catalyzes the formation of the alpha-1,6-glucosidic linkages in glycogen by scission of a 1,4-alpha-linked oligosaccharide from growing alpha-1,4-glucan chains and the subsequent attachment of the oligosaccharide to the alpha-1,6 position. The polypeptide is 1,4-alpha-glucan branching enzyme GlgB (Chlamydia felis (strain Fe/C-56) (Chlamydophila felis)).